A 721-amino-acid chain; its full sequence is Putative cullin-like protein 1 (721 aa).

The Cullin neddylation domain occupies 651–713; it reads DRRYAIDAAL…RDYLERDTEN (63 aa).

This sequence belongs to the cullin family.

In Arabidopsis thaliana (Mouse-ear cress), this protein is Putative cullin-like protein 1.